The primary structure comprises 904 residues: DNA mismatch repair protein MutS (904 aa).

638-645 serves as a coordination point for ATP; it reads GPNMAGKS. The segment at 825-869 is disordered; the sequence is KSKADGTRRPASYHEAQPLLPGMPEPPSTASAEPPQTVTPPEPPV.

This sequence belongs to the DNA mismatch repair MutS family.

Its function is as follows. This protein is involved in the repair of mismatches in DNA. It is possible that it carries out the mismatch recognition step. This protein has a weak ATPase activity. In Oleidesulfovibrio alaskensis (strain ATCC BAA-1058 / DSM 17464 / G20) (Desulfovibrio alaskensis), this protein is DNA mismatch repair protein MutS.